An 860-amino-acid chain; its full sequence is GAS2-like protein 2 (860 aa).

Over residues 1–12 (MSQHVGHGRRPR) the composition is skewed to basic residues. The disordered stretch occupies residues 1–22 (MSQHVGHGRRPRTPGPPVRSIR). The region spanning 32–159 (EAMKEDLAEW…CLLELGRRAW (128 aa)) is the Calponin-homology (CH) domain. The 73-residue stretch at 201-273 (CHFHNLDQMV…HYLDKHDPCR (73 aa)) folds into the GAR domain. Disordered stretches follow at residues 281–459 (PGSF…SLAS), 473–574 (QLSE…RHTS), 697–743 (TTVR…KGKR), 758–781 (KLRP…IPKP), and 801–860 (ATLG…ESWV). Residues 301-316 (GPSQPQPTMTISRSQS) are compositionally biased toward polar residues. Positions 347-364 (PPVRARTLREDPLPRSQE) are enriched in basic and acidic residues. Polar residues-rich tracts occupy residues 365-393 (KPTP…STLS) and 473-485 (QLSE…SSSP). The interval 431 to 860 (QRLQIPEATS…PLSPEEESWV (430 aa)) is interaction with ADORA2A and GNAS. A compositionally biased stretch (basic and acidic residues) spans 530 to 549 (NLDRSTHGHHSVEASGDHQT). Positions 724–733 (RSCSDPSSDK) are enriched in polar residues. A compositionally biased stretch (basic residues) spans 758–768 (KLRPRIRPRRD). A compositionally biased stretch (polar residues) spans 828–840 (SNISLESSIQPAE).

Belongs to the GAS2 family. Interacts with ADORA2A (via its cytoplasmic C-terminal domain). Interacts with GNAS, GNAL, GNAQ, and GNA13. Interacts with MAPRE1. As to expression, expressed in tracheal epithelial cells (at protein level).

It is found in the cytoplasm. The protein localises to the cytoskeleton. It localises to the cell membrane. Its subcellular location is the stress fiber. The protein resides in the cilium basal body. Involved in the cross-linking of microtubules and microfilaments. Regulates microtubule dynamics and stability by interacting with microtubule plus-end tracking proteins, such as MAPRE1, to regulate microtubule growth along actin stress fibers. Enhances ADORA2-mediated adenylyl cyclase activation by acting as a scaffold to recruit trimeric G-protein complexes to ADORA2A. Regulates ciliary orientation and performance in cells located in the airway. This chain is GAS2-like protein 2 (Gas2l2), found in Mus musculus (Mouse).